Here is a 457-residue protein sequence, read N- to C-terminus: Ribosomal protein uS12 methylthiotransferase RimO (457 aa).

The 111-residue stretch at 6–116 (PKVGFVSLGC…VMEAVHAALP (111 aa)) folds into the MTTase N-terminal domain. The [4Fe-4S] cluster site is built by C15, C51, C80, C147, C151, and C154. A Radical SAM core domain is found at 133–371 (LTPRHYAYLK…AKQAQISALR (239 aa)). In terms of domain architecture, TRAM spans 373 to 441 (ESKIGSVQQC…EHDLFGDALP (69 aa)).

This sequence belongs to the methylthiotransferase family. RimO subfamily. [4Fe-4S] cluster serves as cofactor.

Its subcellular location is the cytoplasm. The enzyme catalyses L-aspartate(89)-[ribosomal protein uS12]-hydrogen + (sulfur carrier)-SH + AH2 + 2 S-adenosyl-L-methionine = 3-methylsulfanyl-L-aspartate(89)-[ribosomal protein uS12]-hydrogen + (sulfur carrier)-H + 5'-deoxyadenosine + L-methionine + A + S-adenosyl-L-homocysteine + 2 H(+). Catalyzes the methylthiolation of an aspartic acid residue of ribosomal protein uS12. The sequence is that of Ribosomal protein uS12 methylthiotransferase RimO from Xanthomonas axonopodis pv. citri (strain 306).